Consider the following 72-residue polypeptide: Translation initiation factor IF-1 (72 aa).

Positions 1 to 72 constitute an S1-like domain; the sequence is MSKEGKITLK…TRGRIIYRIS (72 aa).

The protein belongs to the IF-1 family. Component of the 30S ribosomal translation pre-initiation complex which assembles on the 30S ribosome in the order IF-2 and IF-3, IF-1 and N-formylmethionyl-tRNA(fMet); mRNA recruitment can occur at any time during PIC assembly.

The protein localises to the cytoplasm. Functionally, one of the essential components for the initiation of protein synthesis. Stabilizes the binding of IF-2 and IF-3 on the 30S subunit to which N-formylmethionyl-tRNA(fMet) subsequently binds. Helps modulate mRNA selection, yielding the 30S pre-initiation complex (PIC). Upon addition of the 50S ribosomal subunit IF-1, IF-2 and IF-3 are released leaving the mature 70S translation initiation complex. This is Translation initiation factor IF-1 from Malacoplasma penetrans (strain HF-2) (Mycoplasma penetrans).